We begin with the raw amino-acid sequence, 427 residues long: MAKTIQAIRGMNDCLPTETPVWQWVESKVRSTLASYGYSEIRMPIVENTPLFARAIGEVTDVVSKEMFTFNDRDNESLTLRPEGTAGCVRAGIEHGLLYNQEQRLWYMGPMFRYERPQKGRYRQFHQAGVEVFGIANAEIDAELIILTARLWKELGIEQHVTLQLNSIGSLEARANYRSALVEFLQQYVGLMNEEEKERLLKNPLRILDTKNEALQQALNNAPKLLDYLDDDSREHFARLCAILDNVGISYEINPKLVRGLDYYNKTVFEWVTTALGAQGTICGGGRYDGLVEQLGGHATCGVGFAMGLERLILLVQEVNKAIPLPQSAVDIYLIFAGENTASAAFRLAEKVRSELPHLRTMMHCSGGNFKKQFKRADKSGAKIALVLGESEVQNQQVVVKDLLGGAEQQTVALEAVIDHLKTSFKE.

This sequence belongs to the class-II aminoacyl-tRNA synthetase family. As to quaternary structure, homodimer.

It localises to the cytoplasm. The catalysed reaction is tRNA(His) + L-histidine + ATP = L-histidyl-tRNA(His) + AMP + diphosphate + H(+). The polypeptide is Histidine--tRNA ligase (Mannheimia succiniciproducens (strain KCTC 0769BP / MBEL55E)).